We begin with the raw amino-acid sequence, 313 residues long: Probable 5-dehydro-4-deoxyglucarate dehydratase 1 (313 aa).

Belongs to the DapA family.

The enzyme catalyses 5-dehydro-4-deoxy-D-glucarate + H(+) = 2,5-dioxopentanoate + CO2 + H2O. It participates in carbohydrate acid metabolism; D-glucarate degradation; 2,5-dioxopentanoate from D-glucarate: step 2/2. In Streptomyces avermitilis (strain ATCC 31267 / DSM 46492 / JCM 5070 / NBRC 14893 / NCIMB 12804 / NRRL 8165 / MA-4680), this protein is Probable 5-dehydro-4-deoxyglucarate dehydratase 1.